A 156-amino-acid polypeptide reads, in one-letter code: SsrA-binding protein (156 aa).

It belongs to the SmpB family.

It localises to the cytoplasm. Its function is as follows. Required for rescue of stalled ribosomes mediated by trans-translation. Binds to transfer-messenger RNA (tmRNA), required for stable association of tmRNA with ribosomes. tmRNA and SmpB together mimic tRNA shape, replacing the anticodon stem-loop with SmpB. tmRNA is encoded by the ssrA gene; the 2 termini fold to resemble tRNA(Ala) and it encodes a 'tag peptide', a short internal open reading frame. During trans-translation Ala-aminoacylated tmRNA acts like a tRNA, entering the A-site of stalled ribosomes, displacing the stalled mRNA. The ribosome then switches to translate the ORF on the tmRNA; the nascent peptide is terminated with the 'tag peptide' encoded by the tmRNA and targeted for degradation. The ribosome is freed to recommence translation, which seems to be the essential function of trans-translation. The polypeptide is SsrA-binding protein (Clostridium beijerinckii (strain ATCC 51743 / NCIMB 8052) (Clostridium acetobutylicum)).